A 299-amino-acid polypeptide reads, in one-letter code: MKKLGTDLLKRGFAKMVKHGVVMDVTNVEQALIAEEAGATAVMALERVPADIRVQGGVARMSDPEMILEIKDAVSIPVMAKARIGHYVEAQVLESIGVDMVDESEVLTPADEVNHIDKRAFTAPFVCGARNLGEALRRIDEGAAMIRTKGEAGTGNVVEAVKHMRAVNEGIARVIGYKEMGLEAELIQMARNELKVPMELISEVAELKRLPVVNFAAGGIATPADAALMMQMGCDGVFVGSGIFKSGNPAVRAKAIVEATYNFDKPEVIAEVSKNLGEAMVGINIDEIPEEMLLAKRGI.

Position 24 (D24) interacts with D-ribose 5-phosphate. K81 functions as the Schiff-base intermediate with D-ribose 5-phosphate in the catalytic mechanism. A D-ribose 5-phosphate-binding site is contributed by G153. R165 serves as a coordination point for D-glyceraldehyde 3-phosphate. D-ribose 5-phosphate-binding positions include G219 and 240 to 241 (GS).

This sequence belongs to the PdxS/SNZ family. As to quaternary structure, in the presence of PdxT, forms a dodecamer of heterodimers.

The enzyme catalyses aldehydo-D-ribose 5-phosphate + D-glyceraldehyde 3-phosphate + L-glutamine = pyridoxal 5'-phosphate + L-glutamate + phosphate + 3 H2O + H(+). Its pathway is cofactor biosynthesis; pyridoxal 5'-phosphate biosynthesis. Its function is as follows. Catalyzes the formation of pyridoxal 5'-phosphate from ribose 5-phosphate (RBP), glyceraldehyde 3-phosphate (G3P) and ammonia. The ammonia is provided by the PdxT subunit. Can also use ribulose 5-phosphate and dihydroxyacetone phosphate as substrates, resulting from enzyme-catalyzed isomerization of RBP and G3P, respectively. The protein is Pyridoxal 5'-phosphate synthase subunit PdxS of Methanococcus maripaludis (strain DSM 14266 / JCM 13030 / NBRC 101832 / S2 / LL).